The following is a 314-amino-acid chain: (-)-isopiperitenone reductase (314 aa).

10–33 (VTGANKGIGFEICRQLAEKGIIVI) contributes to the NADP(+) binding site. Ser-182 is a substrate binding site.

The protein belongs to the short-chain dehydrogenases/reductases (SDR) family.

It is found in the cytoplasm. It catalyses the reaction (2R,5R)-isopulegone + NADP(+) = (6R)-isopiperitenone + NADPH + H(+). Its pathway is secondary metabolite biosynthesis; terpenoid biosynthesis. Functionally, monoterpene synthase that catalyzes the specific reduction of the 1(2)-double bond of (-)-isopiperitenone to produce (+)-cis-isopulegone. Does not catalyze the reverse reaction. Unable to reduce (+)-pulegone, (+)-cis-isopulegone, (-)-menthone or the 1,2-double bond of (-)-carvone. Able to utilize NADH with 20% the efficiency of NADPH. The polypeptide is (-)-isopiperitenone reductase (Mentha piperita (Peppermint)).